The chain runs to 347 residues: Gas vesicle ATPase GvpN1 (347 aa).

Basic residues predominate over residues 1-11; the sequence is MTNESRKRKVR. The interval 1–64 is disordered; sequence MTNESRKRKV…EGFVPEEQSF (64 aa). Basic and acidic residues predominate over residues 18–55; that stretch reads SRGDKKQGRSQSRDDKEIERLERQNDARGQESSTHVDE. 91 to 98 contributes to the ATP binding site; the sequence is GPTGCGKT.

This sequence belongs to the CbbQ/NirQ/NorQ/GpvN family. In terms of assembly, forms homodimers, forms a GvpN1-GvpO1 heterodimer, interacts with GvpC1 (via the latter's C-terminus) and GvpL, might interact with GvpA1.

The protein localises to the gas vesicle. It localises to the cytoplasm. The catalysed reaction is ATP + H2O = ADP + phosphate + H(+). Functionally, an ATPase that functions in gas vesicle formation. A minor component of the gas vesicle, also found in soluble extracts. Probably enhances gas vesicle formation. Gas vesicles are hollow, gas filled proteinaceous nanostructures found in several microbial planktonic microorganisms. They allow positioning of halobacteria at the optimal depth for growth in the poorly aerated, shallow brine pools of their habitat. Its function is as follows. Expression of a 9.5 kb p-vac DNA fragment containing 2 divergently transcribed regions (gvpD-gvpE-gvpF-gvpG-gvpH-gvpI-gvpJ-gvpK-gvpL-gvpM and gvpA-gvpC-gvpN-gvpO) allows H.volcanii to produce gas vesicles. A similar region restores gas vesicle production in H.halobium without the p-vac locus, but which still have the c-vac locus. The protein is Gas vesicle ATPase GvpN1 (gvpN11) of Halobacterium salinarum (strain ATCC 700922 / JCM 11081 / NRC-1) (Halobacterium halobium).